Here is a 207-residue protein sequence, read N- to C-terminus: Guanylate kinase (207 aa).

The Guanylate kinase-like domain occupies 6 to 185 (GLLIVLSGPS…AKQRIQSIVE (180 aa)). Position 13 to 20 (13 to 20 (GPSGVGKG)) interacts with ATP.

The protein belongs to the guanylate kinase family.

It is found in the cytoplasm. The enzyme catalyses GMP + ATP = GDP + ADP. In terms of biological role, essential for recycling GMP and indirectly, cGMP. This Staphylococcus saprophyticus subsp. saprophyticus (strain ATCC 15305 / DSM 20229 / NCIMB 8711 / NCTC 7292 / S-41) protein is Guanylate kinase.